Here is a 258-residue protein sequence, read N- to C-terminus: UPF0246 protein YaaA (258 aa).

The protein belongs to the UPF0246 family.

The protein is UPF0246 protein YaaA of Escherichia coli O157:H7 (strain EC4115 / EHEC).